The primary structure comprises 359 residues: Membrane-bound lytic murein transglycosylase C (359 aa).

Positions 1-16 are cleaved as a signal peptide; it reads MKKYLALALIAPLLIS. Cysteine 17 is lipidated: N-palmitoyl cysteine. A lipid anchor (S-diacylglycerol cysteine) is attached at cysteine 17.

It belongs to the transglycosylase Slt family.

Its subcellular location is the cell outer membrane. It catalyses the reaction Exolytic cleavage of the (1-&gt;4)-beta-glycosidic linkage between N-acetylmuramic acid (MurNAc) and N-acetylglucosamine (GlcNAc) residues in peptidoglycan, from either the reducing or the non-reducing ends of the peptidoglycan chains, with concomitant formation of a 1,6-anhydrobond in the MurNAc residue.. In terms of biological role, murein-degrading enzyme. May play a role in recycling of muropeptides during cell elongation and/or cell division. The chain is Membrane-bound lytic murein transglycosylase C from Escherichia coli O7:K1 (strain IAI39 / ExPEC).